The following is a 189-amino-acid chain: MKEIKPAILFFIVFTILCGGVYPAVVTSIAHAVFPKQAKGSFITDKSGREIGSALIGQPFSDARYFWPRPSATTDFGYNPMTSGGSNSGPTNPDFLKTVGDRVKSLHDTGITGNIPADLVEASASGLDPHITPEAAKVQVPRVAKARGMTMEELKKLVDARTEDRQLGFLGEQRVNVLELNLELDKLSR.

The chain crosses the membrane as a helical span at residues 6-26; the sequence is PAILFFIVFTILCGGVYPAVV.

This sequence belongs to the KdpC family. The system is composed of three essential subunits: KdpA, KdpB and KdpC.

The protein resides in the cell inner membrane. Part of the high-affinity ATP-driven potassium transport (or Kdp) system, which catalyzes the hydrolysis of ATP coupled with the electrogenic transport of potassium into the cytoplasm. This subunit acts as a catalytic chaperone that increases the ATP-binding affinity of the ATP-hydrolyzing subunit KdpB by the formation of a transient KdpB/KdpC/ATP ternary complex. The chain is Potassium-transporting ATPase KdpC subunit from Geotalea uraniireducens (strain Rf4) (Geobacter uraniireducens).